Reading from the N-terminus, the 251-residue chain is 2,3-bisphosphoglycerate-dependent phosphoglycerate mutase 2 (251 aa).

Residues 8-15, 21-22, Arg-60, 87-90, Lys-98, 114-115, and 183-184 contribute to the substrate site; these read RHGESTWN, TG, ERHY, RR, and GN. His-9 serves as the catalytic Tele-phosphohistidine intermediate. Glu-87 (proton donor/acceptor) is an active-site residue.

This sequence belongs to the phosphoglycerate mutase family. BPG-dependent PGAM subfamily. Homodimer.

The enzyme catalyses (2R)-2-phosphoglycerate = (2R)-3-phosphoglycerate. The protein operates within carbohydrate degradation; glycolysis; pyruvate from D-glyceraldehyde 3-phosphate: step 3/5. Functionally, catalyzes the interconversion of 2-phosphoglycerate and 3-phosphoglycerate. In Nitrosospira multiformis (strain ATCC 25196 / NCIMB 11849 / C 71), this protein is 2,3-bisphosphoglycerate-dependent phosphoglycerate mutase 2.